Consider the following 455-residue polypeptide: MSFIPHKLEQIKKMLDTIGASSVDQLFDEIPRHLRADTLKIKDGINEIQLANLMRKRANKNHHNINYIGAGAYSHHIPAAIWDIVARGEFYTAYTPYQAEASQGGLQVIYEFQTMMAGLTGMDASNASMYDGATALAESVLMAIRSNKKAKSQKVLIAEALHPTYLRVLETITKHQGIEFDIVNLDSKNGKTDVTKLEDFANTNYAAVVIQSPNFLGQLADVDGITNWAHKHGALVIAVTNPMSLAILKSPAEWGDNGADIVCGEGQPMGVPLASGGPYFGFMTCKMAHVRQMPGRIVGRTVDLDGNEGFCLTLQAREQHIRRAKATSNICTNQGLMVTAATIYMSLLGAEGLERVASISHENTQTLATELAKINGVSIRFNSAFFNEVVIDLPVNAETFVTEMEKEAIDAGYFLGEYHSDLANSIMVCATEIHTSEDIKEYIEATKKVLARIGG.

It belongs to the GcvP family. N-terminal subunit subfamily. In terms of assembly, the glycine cleavage system is composed of four proteins: P, T, L and H. In this organism, the P 'protein' is a heterodimer of two subunits.

The catalysed reaction is N(6)-[(R)-lipoyl]-L-lysyl-[glycine-cleavage complex H protein] + glycine + H(+) = N(6)-[(R)-S(8)-aminomethyldihydrolipoyl]-L-lysyl-[glycine-cleavage complex H protein] + CO2. The glycine cleavage system catalyzes the degradation of glycine. The P protein binds the alpha-amino group of glycine through its pyridoxal phosphate cofactor; CO(2) is released and the remaining methylamine moiety is then transferred to the lipoamide cofactor of the H protein. The polypeptide is Probable glycine dehydrogenase (decarboxylating) subunit 1 (Francisella tularensis subsp. tularensis (strain FSC 198)).